We begin with the raw amino-acid sequence, 356 residues long: Peptide chain release factor 1 (356 aa).

An N5-methylglutamine modification is found at Gln233.

Belongs to the prokaryotic/mitochondrial release factor family. Methylated by PrmC. Methylation increases the termination efficiency of RF1.

Its subcellular location is the cytoplasm. Peptide chain release factor 1 directs the termination of translation in response to the peptide chain termination codons UAG and UAA. In Bacillus licheniformis (strain ATCC 14580 / DSM 13 / JCM 2505 / CCUG 7422 / NBRC 12200 / NCIMB 9375 / NCTC 10341 / NRRL NRS-1264 / Gibson 46), this protein is Peptide chain release factor 1.